Here is a 603-residue protein sequence, read N- to C-terminus: Translation initiation factor IF-2 (603 aa).

One can recognise a tr-type G domain in the interval 112–279; that stretch reads TRPPIITIMG…NINLQAEILD (168 aa). The segment at 121–128 is G1; it reads GHVDHGKT. Residue 121–128 coordinates GTP; that stretch reads GHVDHGKT. Residues 146–150 are G2; sequence GITQH. The segment at 167-170 is G3; that stretch reads DTPG. GTP contacts are provided by residues 167–171 and 221–224; these read DTPGH and NKMD. Residues 221-224 form a G4 region; sequence NKMD. A G5 region spans residues 257-259; it reads SAL.

The protein belongs to the TRAFAC class translation factor GTPase superfamily. Classic translation factor GTPase family. IF-2 subfamily.

The protein localises to the cytoplasm. In terms of biological role, one of the essential components for the initiation of protein synthesis. Protects formylmethionyl-tRNA from spontaneous hydrolysis and promotes its binding to the 30S ribosomal subunits. Also involved in the hydrolysis of GTP during the formation of the 70S ribosomal complex. The sequence is that of Translation initiation factor IF-2 from Mycoplasmopsis pulmonis (strain UAB CTIP) (Mycoplasma pulmonis).